Here is a 355-residue protein sequence, read N- to C-terminus: UDP-N-acetylglucosamine--N-acetylmuramyl-(pentapeptide) pyrophosphoryl-undecaprenol N-acetylglucosamine transferase (355 aa).

Residues 13–15, Asn125, Arg162, Ser190, Ile244, and Gln289 each bind UDP-N-acetyl-alpha-D-glucosamine; that span reads TGG.

This sequence belongs to the glycosyltransferase 28 family. MurG subfamily.

The protein resides in the cell inner membrane. It carries out the reaction di-trans,octa-cis-undecaprenyl diphospho-N-acetyl-alpha-D-muramoyl-L-alanyl-D-glutamyl-meso-2,6-diaminopimeloyl-D-alanyl-D-alanine + UDP-N-acetyl-alpha-D-glucosamine = di-trans,octa-cis-undecaprenyl diphospho-[N-acetyl-alpha-D-glucosaminyl-(1-&gt;4)]-N-acetyl-alpha-D-muramoyl-L-alanyl-D-glutamyl-meso-2,6-diaminopimeloyl-D-alanyl-D-alanine + UDP + H(+). Its pathway is cell wall biogenesis; peptidoglycan biosynthesis. Its function is as follows. Cell wall formation. Catalyzes the transfer of a GlcNAc subunit on undecaprenyl-pyrophosphoryl-MurNAc-pentapeptide (lipid intermediate I) to form undecaprenyl-pyrophosphoryl-MurNAc-(pentapeptide)GlcNAc (lipid intermediate II). The protein is UDP-N-acetylglucosamine--N-acetylmuramyl-(pentapeptide) pyrophosphoryl-undecaprenol N-acetylglucosamine transferase of Neisseria meningitidis serogroup B (strain ATCC BAA-335 / MC58).